The following is a 299-amino-acid chain: MTESNRLRIAIQKSGRLSTDSQQLLKSCGIKFSINEQRLIAHADNMPIDLLRVRDDDIPGLVMDGVVDLGIIGENVLEEEQIERQTLNKPAEFVKLRQLDFGACRLSLAVPSEFSYADASSLEGLRIATSYPNLLRRFMQQKGISYRDCMLKGSVEVAPRAGLADGICDLVSTGATLEANGLYETEVIYRSMACVIQSTQTQTPSKQALIDRILSRVNGVIRARESKYILLHAPTETLDQIVALLPGAENPTVLPLNDDTNRVAIHAVSTEDLFWDTMEELTALGASSILVMPIEKMMG.

This sequence belongs to the ATP phosphoribosyltransferase family. Long subfamily. Requires Mg(2+) as cofactor.

The protein resides in the cytoplasm. It carries out the reaction 1-(5-phospho-beta-D-ribosyl)-ATP + diphosphate = 5-phospho-alpha-D-ribose 1-diphosphate + ATP. It participates in amino-acid biosynthesis; L-histidine biosynthesis; L-histidine from 5-phospho-alpha-D-ribose 1-diphosphate: step 1/9. Feedback inhibited by histidine. Catalyzes the condensation of ATP and 5-phosphoribose 1-diphosphate to form N'-(5'-phosphoribosyl)-ATP (PR-ATP). Has a crucial role in the pathway because the rate of histidine biosynthesis seems to be controlled primarily by regulation of HisG enzymatic activity. The sequence is that of ATP phosphoribosyltransferase from Shewanella sp. (strain ANA-3).